The sequence spans 76 residues: Sec-independent protein translocase protein TatA (76 aa).

A helical membrane pass occupies residues 1 to 21 (MGSFSIWHWLIVLAVVLLLFG). Positions 43-76 (MSDEDAKDDARDSGRTIDAKADETVNDVKKTTKS) are disordered. The span at 50–76 (DDARDSGRTIDAKADETVNDVKKTTKS) shows a compositional bias: basic and acidic residues.

This sequence belongs to the TatA/E family. As to quaternary structure, the Tat system comprises two distinct complexes: a TatABC complex, containing multiple copies of TatA, TatB and TatC subunits, and a separate TatA complex, containing only TatA subunits. Substrates initially bind to the TatABC complex, which probably triggers association of the separate TatA complex to form the active translocon.

The protein localises to the cell inner membrane. Its function is as follows. Part of the twin-arginine translocation (Tat) system that transports large folded proteins containing a characteristic twin-arginine motif in their signal peptide across membranes. TatA could form the protein-conducting channel of the Tat system. In Brucella anthropi (strain ATCC 49188 / DSM 6882 / CCUG 24695 / JCM 21032 / LMG 3331 / NBRC 15819 / NCTC 12168 / Alc 37) (Ochrobactrum anthropi), this protein is Sec-independent protein translocase protein TatA.